The chain runs to 268 residues: Imidazole glycerol phosphate synthase subunit HisF (268 aa).

Residues Asp12 and Asp131 contribute to the active site.

Belongs to the HisA/HisF family. As to quaternary structure, heterodimer of HisH and HisF.

The protein localises to the cytoplasm. It carries out the reaction 5-[(5-phospho-1-deoxy-D-ribulos-1-ylimino)methylamino]-1-(5-phospho-beta-D-ribosyl)imidazole-4-carboxamide + L-glutamine = D-erythro-1-(imidazol-4-yl)glycerol 3-phosphate + 5-amino-1-(5-phospho-beta-D-ribosyl)imidazole-4-carboxamide + L-glutamate + H(+). Its pathway is amino-acid biosynthesis; L-histidine biosynthesis; L-histidine from 5-phospho-alpha-D-ribose 1-diphosphate: step 5/9. Its function is as follows. IGPS catalyzes the conversion of PRFAR and glutamine to IGP, AICAR and glutamate. The HisF subunit catalyzes the cyclization activity that produces IGP and AICAR from PRFAR using the ammonia provided by the HisH subunit. The polypeptide is Imidazole glycerol phosphate synthase subunit HisF (Methanocorpusculum labreanum (strain ATCC 43576 / DSM 4855 / Z)).